Consider the following 739-residue polypeptide: UPF0313 protein YgiQ (739 aa).

Residues 372–650 enclose the Radical SAM core domain; that stretch reads AYEMIRFSVN…KALLRYHDPA (279 aa). Cys-386, Cys-390, and Cys-393 together coordinate [4Fe-4S] cluster. A disordered region spans residues 685–739; the sequence is REARRQNRNTRPALTKHTPMATQRQTPATAKKASSTQSRPVNAGAKKRPKAAVGR. The segment covering 704–724 has biased composition (polar residues); it reads MATQRQTPATAKKASSTQSRP. Over residues 729 to 739 the composition is skewed to basic residues; the sequence is AKKRPKAAVGR.

The protein belongs to the UPF0313 family. [4Fe-4S] cluster is required as a cofactor.

The polypeptide is UPF0313 protein YgiQ (Shigella flexneri).